A 183-amino-acid polypeptide reads, in one-letter code: MNSLIFGKQLAFHKIVPTTAIGWLVPLGNPSLQIPGQKQLGSIHRWLREKLQQDHKDTEDKDFFSNNGILLAVPKKKVSHQKKRQKLYGPGKKQLKMIHHLNKCPSCGHYKRANTLCMYCVGQISHIWKTHTAKEEIKPRQEEELSELDQRVLYPGRRDTKYTKDLKDKDNYLERRVRTLKKD.

The N-terminal 71 residues, 1–71 (MNSLIFGKQL…DFFSNNGILL (71 aa)), are a transit peptide targeting the mitochondrion. Positions 104, 107, 117, and 120 each coordinate Zn(2+).

This sequence belongs to the bacterial ribosomal protein bL32 family. Component of the mitochondrial large ribosomal subunit (mt-LSU). Mature yeast 74S mitochondrial ribosomes consist of a small (37S) and a large (54S) subunit. The 37S small subunit contains a 15S ribosomal RNA (15S mt-rRNA) and 34 different proteins. The 54S large subunit contains a 21S rRNA (21S mt-rRNA) and 46 different proteins. bL32m has a zinc binding site. In terms of processing, MRPL32 precursor is processed by the m-AAA protease (composed of YTA12/RCA1 and YTA10/AFG3), which cleaves the N-terminal transit peptide. Cleavage by the m-AAA protease takes place prior to assembly into the large subunit, an essential step for mitochondrial ribosome (mitoribosome) assembly. Proper processing by the m-AAA protease is dependent on the zinc-binding region within the tightly folded C-terminal domain of MRPL32: zinc-dependent folding halts degradation initiated from the N-terminus and triggers the release of mature MRPL32.

It localises to the mitochondrion. Its function is as follows. Component of the mitochondrial ribosome (mitoribosome), a dedicated translation machinery responsible for the synthesis of mitochondrial genome-encoded proteins, including at least some of the essential transmembrane subunits of the mitochondrial respiratory chain. The mitoribosomes are attached to the mitochondrial inner membrane and translation products are cotranslationally integrated into the membrane. This chain is Large ribosomal subunit protein bL32m, found in Saccharomyces cerevisiae (strain ATCC 204508 / S288c) (Baker's yeast).